Here is a 1085-residue protein sequence, read N- to C-terminus: RecBCD enzyme subunit RecC (1085 aa).

This sequence belongs to the RecC family. In terms of assembly, heterotrimer of RecB, RecC and RecD. All subunits contribute to DNA-binding.

Functionally, a helicase/nuclease that prepares dsDNA breaks (DSB) for recombinational DNA repair. Binds to DSBs and unwinds DNA via a highly rapid and processive ATP-dependent bidirectional helicase activity. Holoenzyme degrades any linearized DNA that is unable to undergo homologous recombination. In the holoenzyme this subunit recognizes the wild-type Chi sequence, and when added to isolated RecB increases its ATP-dependent helicase processivity. Unlike the case in E.coli, suppresses RecA-dependent homologous recombination, is instead required for single-strand annealing pathway repair of DSB. The polypeptide is RecBCD enzyme subunit RecC (Mycolicibacterium smegmatis (strain ATCC 700084 / mc(2)155) (Mycobacterium smegmatis)).